Reading from the N-terminus, the 976-residue chain is Leucine--tRNA ligase (976 aa).

Positions 63–74 (PYPSGVGLHVGH) match the 'HIGH' region motif. The short motif at 745–749 (KMGKS) is the 'KMSKS' region element. Lysine 748 is an ATP binding site.

Belongs to the class-I aminoacyl-tRNA synthetase family.

The protein localises to the cytoplasm. The catalysed reaction is tRNA(Leu) + L-leucine + ATP = L-leucyl-tRNA(Leu) + AMP + diphosphate. The chain is Leucine--tRNA ligase from Corynebacterium jeikeium (strain K411).